The sequence spans 269 residues: Microtubule-associated protein RP/EB family member 1 (269 aa).

The region spanning 14 to 116 (NLSRHDMLAW…FVQWFKKFFD (103 aa)) is the Calponin-homology (CH) domain. Residues 168 to 190 (RTAVSNKPPAQGISKKPATVGNG) form a disordered region. An EB1 C-terminal domain is found at 186-256 (TVGNGDDESA…LYATDEGFVI (71 aa)).

Belongs to the MAPRE family.

Its subcellular location is the cytoplasm. It is found in the cytoskeleton. The protein localises to the microtubule organizing center. The protein resides in the centrosome. It localises to the golgi apparatus. Its subcellular location is the spindle. It is found in the spindle pole. Its function is as follows. Plus-end tracking protein (+TIP) that binds to the plus-end of microtubules and regulates the dynamics of the microtubule cytoskeleton. Promotes cytoplasmic microtubule nucleation and elongation. Involved in mitotic spindle positioning by stabilizing microtubules and promoting dynamic connection between astral microtubules and the cortex during mitotic chromosome segregation. The chain is Microtubule-associated protein RP/EB family member 1 (mapre1) from Xenopus tropicalis (Western clawed frog).